A 431-amino-acid chain; its full sequence is Histidinol dehydrogenase (431 aa).

NAD(+) contacts are provided by tyrosine 127, glutamine 185, and asparagine 208. 3 residues coordinate substrate: serine 234, glutamine 256, and histidine 259. Zn(2+) contacts are provided by glutamine 256 and histidine 259. Residues glutamate 323 and histidine 324 each act as proton acceptor in the active site. The substrate site is built by histidine 324, aspartate 357, glutamate 411, and histidine 416. Aspartate 357 contributes to the Zn(2+) binding site. Residue histidine 416 participates in Zn(2+) binding.

The protein belongs to the histidinol dehydrogenase family. Zn(2+) serves as cofactor.

It catalyses the reaction L-histidinol + 2 NAD(+) + H2O = L-histidine + 2 NADH + 3 H(+). It participates in amino-acid biosynthesis; L-histidine biosynthesis; L-histidine from 5-phospho-alpha-D-ribose 1-diphosphate: step 9/9. Catalyzes the sequential NAD-dependent oxidations of L-histidinol to L-histidinaldehyde and then to L-histidine. This Vibrio vulnificus (strain CMCP6) protein is Histidinol dehydrogenase.